Here is a 302-residue protein sequence, read N- to C-terminus: 4-hydroxy-tetrahydrodipicolinate synthase (302 aa).

Residue Thr-44 participates in pyruvate binding. Residue Tyr-132 is the Proton donor/acceptor of the active site. The active-site Schiff-base intermediate with substrate is Lys-160. Residue Val-202 coordinates pyruvate.

It belongs to the DapA family. In terms of assembly, homotetramer; dimer of dimers.

Its subcellular location is the cytoplasm. It catalyses the reaction L-aspartate 4-semialdehyde + pyruvate = (2S,4S)-4-hydroxy-2,3,4,5-tetrahydrodipicolinate + H2O + H(+). It functions in the pathway amino-acid biosynthesis; L-lysine biosynthesis via DAP pathway; (S)-tetrahydrodipicolinate from L-aspartate: step 3/4. Catalyzes the condensation of (S)-aspartate-beta-semialdehyde [(S)-ASA] and pyruvate to 4-hydroxy-tetrahydrodipicolinate (HTPA). This Thermomicrobium roseum (strain ATCC 27502 / DSM 5159 / P-2) protein is 4-hydroxy-tetrahydrodipicolinate synthase.